The primary structure comprises 594 residues: UvrABC system protein C (594 aa).

In terms of domain architecture, GIY-YIG spans 13–99; it reads HSSGVYQYFD…IKQLKPKYNI (87 aa). Residues 205 to 240 form the UVR domain; sequence DKLIKELELKMERLSNNLRFEEALIYRDRIAKIQKI.

Belongs to the UvrC family. In terms of assembly, interacts with UvrB in an incision complex.

It is found in the cytoplasm. In terms of biological role, the UvrABC repair system catalyzes the recognition and processing of DNA lesions. UvrC both incises the 5' and 3' sides of the lesion. The N-terminal half is responsible for the 3' incision and the C-terminal half is responsible for the 5' incision. The sequence is that of UvrABC system protein C from Helicobacter pylori (strain Shi470).